The sequence spans 211 residues: Imidazole glycerol phosphate synthase subunit HisH (211 aa).

A Glutamine amidotransferase type-1 domain is found at 3-211; it reads VIAVIDYDMG…VSQIKAPVLV (209 aa). Residue C81 is the Nucleophile of the active site. Residues H186 and E188 contribute to the active site.

As to quaternary structure, heterodimer of HisH and HisF.

The protein resides in the cytoplasm. The catalysed reaction is 5-[(5-phospho-1-deoxy-D-ribulos-1-ylimino)methylamino]-1-(5-phospho-beta-D-ribosyl)imidazole-4-carboxamide + L-glutamine = D-erythro-1-(imidazol-4-yl)glycerol 3-phosphate + 5-amino-1-(5-phospho-beta-D-ribosyl)imidazole-4-carboxamide + L-glutamate + H(+). It catalyses the reaction L-glutamine + H2O = L-glutamate + NH4(+). The protein operates within amino-acid biosynthesis; L-histidine biosynthesis; L-histidine from 5-phospho-alpha-D-ribose 1-diphosphate: step 5/9. IGPS catalyzes the conversion of PRFAR and glutamine to IGP, AICAR and glutamate. The HisH subunit catalyzes the hydrolysis of glutamine to glutamate and ammonia as part of the synthesis of IGP and AICAR. The resulting ammonia molecule is channeled to the active site of HisF. This chain is Imidazole glycerol phosphate synthase subunit HisH, found in Cyanothece sp. (strain PCC 7425 / ATCC 29141).